The sequence spans 422 residues: 5'-deoxyadenosine deaminase (422 aa).

Zn(2+)-binding residues include H57 and H59. 2 residues coordinate substrate: E86 and H178. Residue H205 participates in Zn(2+) binding. The substrate site is built by E208 and D294. D294 lines the Zn(2+) pocket.

Belongs to the metallo-dependent hydrolases superfamily. MTA/SAH deaminase family. In terms of assembly, homotetramer. Requires Zn(2+) as cofactor.

The enzyme catalyses 5'-deoxyadenosine + H2O + H(+) = 5'-deoxyinosine + NH4(+). The catalysed reaction is S-adenosyl-L-homocysteine + H2O + H(+) = S-inosyl-L-homocysteine + NH4(+). It catalyses the reaction S-methyl-5'-thioadenosine + H2O + H(+) = S-methyl-5'-thioinosine + NH4(+). It carries out the reaction adenosine + H2O + H(+) = inosine + NH4(+). The protein operates within amino-acid biosynthesis; S-adenosyl-L-methionine biosynthesis. Catalyzes the deamination of three SAM-derived enzymatic products, namely 5'-deoxyadenosine, S-adenosyl-L-homocysteine, and 5'-methylthioadenosine, to produce the inosine analogs. Can also deaminate adenosine. The preferred substrate for this enzyme is 5'-deoxyadenosine, but all these substrates are efficiently deaminated. Likely functions in a S-adenosyl-L-methionine (SAM) recycling pathway from S-adenosyl-L-homocysteine (SAH) produced from SAM-dependent methylation reactions. May also be involved in the recycling of 5'-deoxyadenosine, whereupon the 5'-deoxyribose moiety of 5'-deoxyinosine is further metabolized to deoxyhexoses used for the biosynthesis of aromatic amino acids in methanogens. This is 5'-deoxyadenosine deaminase from Methanococcus maripaludis (strain C6 / ATCC BAA-1332).